We begin with the raw amino-acid sequence, 443 residues long: Putative type II methyltransferase M.BsuMIIP (443 aa).

The SAM-dependent MTase C5-type domain maps to 4–440 (LRVMSLFSGI…QELIHTYVNK (437 aa)). Residue Cys-78 is part of the active site.

This sequence belongs to the class I-like SAM-binding methyltransferase superfamily. C5-methyltransferase family.

The catalysed reaction is a 2'-deoxycytidine in DNA + S-adenosyl-L-methionine = a 5-methyl-2'-deoxycytidine in DNA + S-adenosyl-L-homocysteine + H(+). A putative methylase, recognizes the double-stranded sequence 5'-GGCC-3', methylates C-?. There is no known cognate restriction enzyme. In Bacillus subtilis (strain 168), this protein is Putative type II methyltransferase M.BsuMIIP (mtbP).